The primary structure comprises 271 residues: Potential ATP-binding protein (271 aa).

34–41 (GQPGVGKT) lines the ATP pocket.

The protein is Potential ATP-binding protein of Staphylococcus aureus.